We begin with the raw amino-acid sequence, 40 residues long: Photosystem II reaction center protein J (40 aa).

Residues Ile8–Phe28 form a helical membrane-spanning segment.

Belongs to the PsbJ family. PSII is composed of 1 copy each of membrane proteins PsbA, PsbB, PsbC, PsbD, PsbE, PsbF, PsbH, PsbI, PsbJ, PsbK, PsbL, PsbM, PsbT, PsbX, PsbY, PsbZ, Psb30/Ycf12, peripheral proteins PsbO, CyanoQ (PsbQ), PsbU, PsbV and a large number of cofactors. It forms dimeric complexes.

Its subcellular location is the cellular thylakoid membrane. Functionally, one of the components of the core complex of photosystem II (PSII). PSII is a light-driven water:plastoquinone oxidoreductase that uses light energy to abstract electrons from H(2)O, generating O(2) and a proton gradient subsequently used for ATP formation. It consists of a core antenna complex that captures photons, and an electron transfer chain that converts photonic excitation into a charge separation. The polypeptide is Photosystem II reaction center protein J (Nostoc sp. (strain PCC 7120 / SAG 25.82 / UTEX 2576)).